Here is a 309-residue protein sequence, read N- to C-terminus: Putative ankyrin repeat protein R603 (309 aa).

ANK repeat units follow at residues 53 to 82, 83 to 112, 114 to 144, 145 to 176, 177 to 206, 214 to 243, and 245 to 274; these read QVNG…MNPE, NKSQ…DVSL, DHFA…DVTS, NNNL…DIHA, DEYF…DVNM, NVLS…DISF, and DDND…DISF.

This chain is Putative ankyrin repeat protein R603, found in Acanthamoeba polyphaga (Amoeba).